A 293-amino-acid chain; its full sequence is Protease HtpX homolog (293 aa).

A run of 2 helical transmembrane segments spans residues 7-26 (ASLL…ALLG) and 30-49 (GMVM…WYYS). Position 131 (His-131) interacts with Zn(2+). Residue Glu-132 is part of the active site. His-135 is a binding site for Zn(2+). 2 consecutive transmembrane segments (helical) span residues 148–168 (ATLA…FWFF) and 180–200 (IGAL…QLGI). Residue Glu-205 participates in Zn(2+) binding.

The protein belongs to the peptidase M48B family. Zn(2+) serves as cofactor.

It is found in the cell inner membrane. The polypeptide is Protease HtpX homolog (Acaryochloris marina (strain MBIC 11017)).